The following is an 887-amino-acid chain: Alanine--tRNA ligase (887 aa).

Residues His-575, His-579, Cys-677, and His-681 each contribute to the Zn(2+) site.

This sequence belongs to the class-II aminoacyl-tRNA synthetase family. The cofactor is Zn(2+).

It is found in the cytoplasm. It carries out the reaction tRNA(Ala) + L-alanine + ATP = L-alanyl-tRNA(Ala) + AMP + diphosphate. In terms of biological role, catalyzes the attachment of alanine to tRNA(Ala) in a two-step reaction: alanine is first activated by ATP to form Ala-AMP and then transferred to the acceptor end of tRNA(Ala). Also edits incorrectly charged Ser-tRNA(Ala) and Gly-tRNA(Ala) via its editing domain. The polypeptide is Alanine--tRNA ligase (Geobacillus kaustophilus (strain HTA426)).